The primary structure comprises 152 residues: Protein SprT-like (152 aa).

One can recognise a SprT-like domain in the interval 6 to 151 (LQQLVCRISL…SKCLGKLELL (146 aa)). H67 provides a ligand contact to Zn(2+). E68 is a catalytic residue. H71 is a Zn(2+) binding site.

This sequence belongs to the SprT family. Requires Zn(2+) as cofactor.

The protein localises to the cytoplasm. In Lysinibacillus sphaericus (strain C3-41), this protein is Protein SprT-like.